The sequence spans 392 residues: Proteasomal ATPase-associated factor 1 (392 aa).

Residue Ala-2 is modified to N-acetylalanine. 5 WD repeats span residues 90–129 (IHTKSITCLDISSGGGLGVSSSADGSMKIWQASNGELRRV), 132–171 (GHVFDVNCCRFFPSGLVVLSGGMDAQLKIWSAEDASCVVT), 174–215 (GHKG…GVIA), 278–316 (IGSDAFNCCTFLSGFLLLAGTQDGNIYQLDVRNPRTPVQ), and 360–392 (ADCDPVYKVATWEKQIYTCCRDGLVRRYQLSDL).

This sequence belongs to the WD repeat PAAF1/RPN14 family. In terms of assembly, interacts with PSMC1, PSMC2, PSMC3, PSMC4, PSMC5 and PSMC6. Interacts with SUPT6H.

In terms of biological role, inhibits proteasome 26S assembly and activity by impairing the association of the 19S regulatory complex with the 20S core. Protects SUPT6H from proteasomal degradation. The protein is Proteasomal ATPase-associated factor 1 (PAAF1) of Bos taurus (Bovine).